The sequence spans 1482 residues: Cystic fibrosis transmembrane conductance regulator (1482 aa).

Residues 1 to 77 lie on the Cytoplasmic side of the membrane; the sequence is MQRSPLEKAN…KLINALRRCF (77 aa). Residues 78–98 form a helical membrane-spanning segment; it reads FWRFVFHGIILYLGEVTKAVQ. The region spanning 81–365 is the ABC transmembrane type-1 1 domain; sequence FVFHGIILYL…WAVQTWYDSL (285 aa). Residues 99–122 lie on the Extracellular side of the membrane; that stretch reads PLLLGRIIASYDPDNKVERSIAIY. A helical transmembrane segment spans residues 123 to 146; sequence LGIGLCLLFIVRTLLLHPAIFGLH. Over 147–195 the chain is Cytoplasmic; sequence HMGMQMRIALFSLIYKKTLKLSSRVLDKISTGQLISLLSNNLNKFDEGL. A helical transmembrane segment spans residues 196 to 216; sequence ALAHFVWIVPLQVVLLMGLLW. The Extracellular portion of the chain corresponds to 217–222; that stretch reads DLLQAS. Residues 223 to 243 traverse the membrane as a helical segment; the sequence is AFCGLAFLIVLALFQAWLGQM. At 244–298 the chain is on the cytoplasmic side; that stretch reads MMKYRERRAGKINERLVITSEMIDNIQSVKAYCWEEAMEKMIENLRETELKLTRK. The helical transmembrane segment at 299-319 threads the bilayer; it reads TAYVRYFNSSAFFFSGFFVVF. The Extracellular segment spans residues 320-339; it reads LAVLPYALIKGIILRKIFTT. The helical transmembrane segment at 340–358 threads the bilayer; sequence ISFCIVLRMAVTRQFPWAV. The Cytoplasmic portion of the chain corresponds to 359–859; it reads QTWYDSLGAI…YLRYITIHKN (501 aa). ATP-binding positions include Trp401, Ser434, 458–465, and Gln493; that span reads GSTGAGKT. The region spanning 423 to 646 is the ABC transporter 1 domain; the sequence is NGDNGLFFSN…RPDFSSKLMG (224 aa). Cys524 carries S-palmitoyl cysteine lipidation. Ser549 and Ser660 each carry phosphoserine. The tract at residues 654–832 is disordered R region; the sequence is SAERRSSILT…DEINEEDLKE (179 aa). The residue at position 670 (Ser670) is a Phosphoserine; by PKA. Ser686 carries the post-translational modification Phosphoserine. Lys688 is covalently cross-linked (Glycyl lysine isopeptide (Lys-Gly) (interchain with G-Cter in ubiquitin)). 6 positions are modified to phosphoserine: Ser700, Ser712, Ser737, Ser769, Ser796, and Ser814. Residues 860-880 form a helical membrane-spanning segment; it reads LVFVLIWCLVIFLVEVAASLV. The ABC transmembrane type-1 2 domain occupies 860 to 1156; it reads LVFVLIWCLV…AVNSSIDVDS (297 aa). At 881–919 the chain is on the extracellular side; that stretch reads GLWLLEDISFKDKTNGTNGANNTFPVIITDTSKYYLFYI. Asn895 and Asn901 each carry an N-linked (GlcNAc...) asparagine glycan. Residues 920–940 form a discontinuously helical membrane-spanning segment; the sequence is YVGIADTFFALGIFRGLPLVH. Residues 941–991 are Cytoplasmic-facing; it reads TLISVSKILHHKMLYSVLKAPMSTFNTLKPGGILNRFSKDIAILDDLLPLT. Residues 992-1012 traverse the membrane as a helical segment; sequence IFDFIQLILIVVGALIVVSAI. The Extracellular segment spans residues 1013–1014; it reads RP. Residues 1015–1035 form a helical membrane-spanning segment; it reads YIFLATVPVIIAFIMLRAYFL. Over 1036 to 1096 the chain is Cytoplasmic; that stretch reads QTSQQLKQLE…TASWFLYLST (61 aa). A helical transmembrane segment spans residues 1097–1117; sequence LRWFQMRIELVFVIFFIAVTF. Over 1118 to 1131 the chain is Extracellular; the sequence is ISILTTGDGEGRVG. A helical transmembrane segment spans residues 1132-1152; sequence ILLTLAMNIMSTLQWAVNSSI. Over 1153 to 1482 the chain is Cytoplasmic; sequence DVDSLMRSVS…TEEEVQETRL (330 aa). Residues 1212 to 1445 enclose the ABC transporter 2 domain; that stretch reads MIVKDLTAKY…KSLYRQAISH (234 aa). Residues Tyr1221 and 1246-1253 each bind ATP; that span reads GRTGSGKS. Residues 1388–1482 form an interaction with GORASP2 region; it reads RVLKNAFANC…TEEEVQETRL (95 aa). The S-palmitoyl cysteine moiety is linked to residue Cys1397. A phosphoserine mark is found at Ser1446 and Ser1458. A PDZ-binding motif is present at residues 1480–1482; it reads TRL.

Belongs to the ABC transporter superfamily. ABCC family. CFTR transporter (TC 3.A.1.202) subfamily. In terms of assembly, monomer; does not require oligomerization for channel activity. May form oligomers in the membrane. Interacts with SLC26A3, SLC26A6 and NHERF1. Interacts with SHANK2. Interacts with MYO6. Interacts (via C-terminus) with GOPC (via PDZ domain); this promotes CFTR internalization and thereby decreases channel activity. Interacts with SLC4A7 through NHERF1. Found in a complex with MYO5B and RAB11A. Interacts with ANO1. Interacts with SLC26A8. Interacts with AHCYL1; the interaction increases CFTR activity. Interacts with CSE1L. The core-glycosylated form interacts with GORASP2 (via PDZ GRASP-type 1 domain) in respone to ER stress. Interacts with MARCHF2; the interaction leads to CFTR ubiqtuitination and degradation. Interacts with ADGRG2. N-glycosylated. In terms of processing, phosphorylated; cAMP treatment promotes phosphorylation and activates the channel. Dephosphorylation decreases the ATPase activity (in vitro). Phosphorylation at PKA sites activates the channel. Phosphorylation at PKC sites enhances the response to phosphorylation by PKA. Phosphorylated by AMPK; this inhibits channel activity. Post-translationally, ubiquitinated, leading to its degradation in the lysosome. Deubiquitination by USP10 in early endosomes enhances its endocytic recycling to the cell membrane. Ubiquitinated by RNF185 during ER stress. Ubiquitinated by MARCHF2.

It is found in the apical cell membrane. Its subcellular location is the early endosome membrane. It localises to the cell membrane. The protein resides in the recycling endosome membrane. The protein localises to the endoplasmic reticulum membrane. It is found in the nucleus. It catalyses the reaction ATP + H2O + closed Cl(-) channel = ADP + phosphate + open Cl(-) channel.. The enzyme catalyses chloride(in) = chloride(out). The catalysed reaction is hydrogencarbonate(in) = hydrogencarbonate(out). It carries out the reaction ATP + H2O = ADP + phosphate + H(+). Functionally, epithelial ion channel that plays an important role in the regulation of epithelial ion and water transport and fluid homeostasis. Mediates the transport of chloride ions across the cell membrane. Possesses an intrinsic ATPase activity and utilizes ATP to gate its channel; the passive flow of anions through the channel is gated by cycles of ATP binding and hydrolysis by the ATP-binding domains. The ion channel is also permeable to HCO(3)(-); selectivity depends on the extracellular chloride concentration. Exerts its function also by modulating the activity of other ion channels and transporters. Contributes to the regulation of the pH and the ion content of the epithelial fluid layer. Modulates the activity of the epithelial sodium channel (ENaC) complex, in part by regulating the cell surface expression of the ENaC complex. May regulate bicarbonate secretion and salvage in epithelial cells by regulating the transporter SLC4A7. Can inhibit the chloride channel activity of ANO1. Plays a role in the chloride and bicarbonate homeostasis during sperm epididymal maturation and capacitation. This chain is Cystic fibrosis transmembrane conductance regulator, found in Didelphis virginiana (North American opossum).